Here is a 188-residue protein sequence, read N- to C-terminus: uncharacterized protein (188 aa).

This sequence belongs to the isochorismatase family.

This is an uncharacterized protein from Escherichia coli O157:H7.